A 138-amino-acid chain; its full sequence is MEIILVGHAHTAKAFKEAVEMIYGEVPNFHPIDFTPKEGLQSLTDKIVSAIEPGKTASTLIITDLFSGTPYNASAELVLKKKAADVVAGMCLPMLLEVAVNANNMSVSQLVSHLMKIKEEFSTSLSEKMTTNAKEDDF.

The PTS EIIA type-4 domain occupies 1–125 (MEIILVGHAH…KIKEEFSTSL (125 aa)). The Tele-phosphohistidine intermediate role is filled by His-8. Residue His-8 is modified to Phosphohistidine; by HPr.

Its subcellular location is the cytoplasm. Functionally, the phosphoenolpyruvate-dependent sugar phosphotransferase system (PTS), a major carbohydrate active transport system, catalyzes the phosphorylation of incoming sugar substrates concomitant with their translocation across the cell membrane. The enzyme II SorABCD PTS system is involved in L-sorbose transport. The polypeptide is PTS system sorbose-specific EIIA component (Lacticaseibacillus casei (Lactobacillus casei)).